Consider the following 351-residue polypeptide: DNA polymerase IV (351 aa).

Residues 4–185 (IIHVDMDCFF…LPLAKIPGVG (182 aa)) enclose the UmuC domain. D8 and D103 together coordinate Mg(2+). The active site involves E104.

This sequence belongs to the DNA polymerase type-Y family. In terms of assembly, monomer. Mg(2+) serves as cofactor.

It localises to the cytoplasm. It carries out the reaction DNA(n) + a 2'-deoxyribonucleoside 5'-triphosphate = DNA(n+1) + diphosphate. Functionally, poorly processive, error-prone DNA polymerase involved in untargeted mutagenesis. Copies undamaged DNA at stalled replication forks, which arise in vivo from mismatched or misaligned primer ends. These misaligned primers can be extended by PolIV. Exhibits no 3'-5' exonuclease (proofreading) activity. May be involved in translesional synthesis, in conjunction with the beta clamp from PolIII. The sequence is that of DNA polymerase IV from Shigella dysenteriae serotype 1 (strain Sd197).